The following is a 1248-amino-acid chain: MYNPYQQSGGPAYGADGYGQQGYGQAYGQQGFGQAYGQQGGGYEAGPAATYTAGAAQPLRPTATGFVNAAASRGLNTELKIPLFRLSFLTAADQAKFETLFRSAVRPGATTITGEDCKHILLRSGLSPFQLGLIWTLCDTNNAGELLFPEFALAMHLVNGVLQGERIPRALDSKVKNEVSSFVDLINFSVGSNSPPPEGQKARTPFDALTQGAGTLQPQATGFMPPTSFGVPQATGLGFGQAPMQPQATGYMPPTSFGAGLGAHTTGGNALASQMTGGLQQYAGGAFQNYQATGGKGLGAQVTGGFAQQPAGANPLLSQLTGGQGFQQQRQPTGANSLMPQVTGGFQQPSNAIGSQPPAMGMPQGLSQGQSVGLQAQATGFLPPSQFAPTAPLAAQKTGFGNNEIYSHAAFASGFPAGEDDKLTPEEKSLFYNIFDTYDTDKTGQLHFKVAAEIFRKSGLNRSELERIWNLCDTNNSGQLNRQEFAVGMHLIYRRINGHNLPHTLPPSLVPSSTRILNNVKNQLKVSSSSKKEPTRIDGLAYKNNDDDILPSFKNRRKTFTEPRQSKDNKTVDDLKKLVEEKRRKLESERSQLSLRQKDQQIKDEETMRHVDSLMHQIRSLPMKKHAAVPSDMKARFDSLTSSISTLFNNIAEIDDEITNAKVHLYRLKNPSSIVGSGPNGEVTEYDQKKARQKAVLAARMAALTGTPIETPSEADLRREEQGLNEEVAKIKEESRKNQEILNDIKSSITEISAPISTFIYGSGNADKDPAYERWELGIGLEPEVCDFIRKLKETQTQAQAQEQARAQEQARAQEQARAQEKARAQEKARAQEQARVQEQARAQEQARAQEQARAQEQARAQEQARAQEQAKADAASRESTRSPEEFARWPQDQSPSHPGLTASVSPQSQSVSVSNRGTPQLGQQQMGSGFYSDYQSADARAAYVRQQSQLKQPAPAPTSTTDFNSEDEEDEEERSLREQLAALKLKRKAEKEAKLAVGRNQTGASQDPAVRASPDEWDEQPSRPSHTPVYSTSPAMASQGELPKQGSSAPHLHPTTTGDRSPFFKQKQGSTSTFDLKAAEQQRRLQRGLDDGDGWSDDEDSSSKPTQPTATTSATDIPSSGADSGARAPVSAAPASIVRPDGSTATQPPVVPSPPVPQPGPSSGAPIPIAPPLPTLNGQQAGPAPSVAPTGHVERAASQPQINDGNEDDEDSDVLSIPESVESEDGKDQYTTAIPEIPYIPPPPPLP.

An EH 1 domain is found at Asp93–Phe182. In terms of domain architecture, EF-hand 1 spans Leu126–Val161. A disordered region spans residues Ala313–Ser337. Over residues Leu316 to Ser337 the composition is skewed to polar residues. 2 consecutive EF-hand domains span residues Glu426–Lys449 and Leu460–Arg495. Positions Glu427–Ile516 constitute an EH 2 domain. Residues Asp473, Asn475, Ser477, Gln479, and Glu484 each coordinate Ca(2+). The interval Asp548–Leu575 is disordered. The span at Thr559 to Leu575 shows a compositional bias: basic and acidic residues. 3 coiled-coil regions span residues Ser566–Gln601, Ser713–Lys746, and Asp787–Glu879. Positions Gln800–Ala817 are enriched in low complexity. Residues Gln800–Pro1248 form a disordered region. Residues Arg818–Glu833 are compositionally biased toward basic and acidic residues. Positions Gln834–Gln868 are enriched in low complexity. Over residues Glu869–Ala888 the composition is skewed to basic and acidic residues. Over residues Ser904 to Ser915 the composition is skewed to low complexity. 2 stretches are compositionally biased toward polar residues: residues Asn916–Gly928 and Arg946–Phe964. The segment covering Asn965–Glu974 has biased composition (acidic residues). A coiled-coil region spans residues Asn965–Ala997. Residues Ser1023–Met1037 are compositionally biased toward polar residues. The segment covering Lys1078 to Asp1091 has biased composition (basic and acidic residues). Residues Asp1092 to Asp1101 show a composition bias toward acidic residues. The span at Lys1105 to Ala1123 shows a compositional bias: polar residues. Pro residues-rich tracts occupy residues Pro1150–Gly1161 and Pro1239–Pro1248.

It belongs to the PAN1 family. Component of the PAN1 actin cytoskeleton-regulatory complex.

It localises to the cell membrane. The protein resides in the endosome membrane. Its subcellular location is the cytoplasm. The protein localises to the cytoskeleton. It is found in the actin patch. Functionally, component of the PAN1 actin cytoskeleton-regulatory complex required for the internalization of endosomes during actin-coupled endocytosis. The complex links the site of endocytosis to the cell membrane-associated actin cytoskeleton. Mediates uptake of external molecules and vacuolar degradation of plasma membrane proteins. Plays a role in the proper organization of the cell membrane-associated actin cytoskeleton and promotes its destabilization. This Eremothecium gossypii (strain ATCC 10895 / CBS 109.51 / FGSC 9923 / NRRL Y-1056) (Yeast) protein is Actin cytoskeleton-regulatory complex protein PAN1 (PAN1).